Here is a 372-residue protein sequence, read N- to C-terminus: Cobalt-precorrin-5B C(1)-methyltransferase (372 aa).

The protein belongs to the CbiD family.

It catalyses the reaction Co-precorrin-5B + S-adenosyl-L-methionine = Co-precorrin-6A + S-adenosyl-L-homocysteine. Its pathway is cofactor biosynthesis; adenosylcobalamin biosynthesis; cob(II)yrinate a,c-diamide from sirohydrochlorin (anaerobic route): step 6/10. Its function is as follows. Catalyzes the methylation of C-1 in cobalt-precorrin-5B to form cobalt-precorrin-6A. The sequence is that of Cobalt-precorrin-5B C(1)-methyltransferase from Geobacillus kaustophilus (strain HTA426).